Consider the following 180-residue polypeptide: Alpha-S2-casein-like A (180 aa).

The first 15 residues, 1–15 (MRFFVFTCLLAVALA), serve as a signal peptide directing secretion. Phosphoserine occurs at positions 23 and 25. The tract at residues 46-66 (PTNQETPSVSSSEESVEVQTE) is disordered.

The protein belongs to the alpha-casein family. As to expression, mammary gland specific. Secreted in milk.

It is found in the secreted. Its function is as follows. Important role in the capacity of milk to transport calcium phosphate. In Oryctolagus cuniculus (Rabbit), this protein is Alpha-S2-casein-like A (CSN1S2A).